A 145-amino-acid chain; its full sequence is Basic phospholipase A2 cPm05 (145 aa).

A signal peptide spans 1 to 21 (MYPAHLLVLLAVCISLLGASA). Positions 22 to 27 (IPPLPL) are excised as a propeptide. 7 disulfide bridges follow: Cys38–Cys98, Cys54–Cys144, Cys56–Cys72, Cys71–Cys125, Cys78–Cys118, Cys87–Cys111, and Cys105–Cys116. Positions 55, 57, and 59 each coordinate Ca(2+). The active site involves His75. Residue Asp76 coordinates Ca(2+). Asp119 is an active-site residue.

It belongs to the phospholipase A2 family. Group I subfamily. D49 sub-subfamily. Ca(2+) is required as a cofactor. In terms of tissue distribution, expressed by the venom gland.

The protein localises to the secreted. The enzyme catalyses a 1,2-diacyl-sn-glycero-3-phosphocholine + H2O = a 1-acyl-sn-glycero-3-phosphocholine + a fatty acid + H(+). In terms of biological role, PLA2 catalyzes the calcium-dependent hydrolysis of the 2-acyl groups in 3-sn-phosphoglycerides. The sequence is that of Basic phospholipase A2 cPm05 from Laticauda semifasciata (Black-banded sea krait).